The following is a 156-amino-acid chain: Small ribosomal subunit protein uS7 (156 aa).

This sequence belongs to the universal ribosomal protein uS7 family. Part of the 30S ribosomal subunit. Contacts proteins S9 and S11.

Functionally, one of the primary rRNA binding proteins, it binds directly to 16S rRNA where it nucleates assembly of the head domain of the 30S subunit. Is located at the subunit interface close to the decoding center, probably blocks exit of the E-site tRNA. The sequence is that of Small ribosomal subunit protein uS7 from Nitrobacter hamburgensis (strain DSM 10229 / NCIMB 13809 / X14).